Here is a 416-residue protein sequence, read N- to C-terminus: Putative nucleoside permease NupX (416 aa).

Over 1-2 (MD) the chain is Periplasmic. Residues 3–23 (VMRSVLGMVVLLTIAFLLSVN) traverse the membrane as a helical segment. The Cytoplasmic segment spans residues 24–31 (KKKISLRT). A helical transmembrane segment spans residues 32-52 (VGAALVLQVVIGGIMLWLPPG). At 53-95 (RWVAEKVAFGVHKVMAYSDAGSAFIFGSLVGPKMDTLFDGAGF) the chain is on the periplasmic side. A helical membrane pass occupies residues 96–118 (IFGFRVLPAIIFVTALVSILYYI). Residues 119-172 (GVMGILIRILGGIFQKALNISKIESFVAVTTIFLGQNEIPAIVKPFIDRLNRNE) lie on the Cytoplasmic side of the membrane. The chain crosses the membrane as a helical span at residues 173-193 (LFTAICSGMASIAGSTMIGYA). The Periplasmic portion of the chain corresponds to 194 to 196 (ALG). A helical membrane pass occupies residues 197–217 (VPVEYLLAASLMAIPGGILFA). At 218 to 246 (RLLSPATESSQVSFNNLSFTETPPKSIIE) the chain is on the cytoplasmic side. Residues 247–267 (AAATGAMTGLKIAAGVATVVM) traverse the membrane as a helical segment. Topologically, residues 268–352 (AFVAIIALIN…QTAGTLDAKT (85 aa)) are periplasmic. A helical membrane pass occupies residues 353 to 373 (VAIISFALCGFANFGSIGVVV). At 374–394 (GAFSAVAPHRAPEIAQLGLRA) the chain is on the cytoplasmic side. Residues 395 to 415 (LAAATLSNLMSATIAGFFIGL) traverse the membrane as a helical segment. A topological domain (periplasmic) is located at residue Ala416.

The protein belongs to the concentrative nucleoside transporter (CNT) (TC 2.A.41) family.

The protein localises to the cell inner membrane. This Escherichia coli (strain K12) protein is Putative nucleoside permease NupX (nupX).